The following is a 372-amino-acid chain: MSIAPPPLSVLLELTHRCPLACPYCSNPIALAALREEMDTAGWRSLLQQAADMGVLQAHFSGGEPMLRKDLPELVAHARALGLYSNLITSGVAGGEPMLDQLQAAGLEHVQLSVQDVDPAGADRIAGYRNSLSRKREFAAAVRARGLPLTINAVLHRHNAERVPGMIALALEWQAERIEVAHTQYYGWGLRNRAALMPSREQLLATIDAVETARRQLGDRLAIDFVTPDYYARQPKPCMGGWGQRFVNISPRGDVLPCHAAETIEGMRFDNLRERSLADIWNNGEAFVRFRGTAWMPEVCQGCPKREIDWGGCRCQALALSGDAATLDPVCERSPIHAQVRAAAEQESASPAPAFVYRRPERLAPAAADMLE.

The Radical SAM core domain maps to 4 to 220 (APPPLSVLLE…ETARRQLGDR (217 aa)). 3 residues coordinate [4Fe-4S] cluster: C18, C22, and C25.

Belongs to the radical SAM superfamily. PqqE family. In terms of assembly, interacts with PqqD. The interaction is necessary for activity of PqqE. Requires [4Fe-4S] cluster as cofactor.

It carries out the reaction [PQQ precursor protein] + S-adenosyl-L-methionine = E-Y cross-linked-[PQQ precursor protein] + 5'-deoxyadenosine + L-methionine + H(+). The protein operates within cofactor biosynthesis; pyrroloquinoline quinone biosynthesis. Catalyzes the cross-linking of a glutamate residue and a tyrosine residue in the PqqA protein as part of the biosynthesis of pyrroloquinoline quinone (PQQ). In Xanthomonas axonopodis pv. citri (strain 306), this protein is PqqA peptide cyclase.